Consider the following 2554-residue polypeptide: Protein sevenless (2554 aa).

The span at 1–10 shows a compositional bias: polar residues; sequence MTMFWQQNVD. A disordered region spans residues 1–25; the sequence is MTMFWQQNVDHQSDEQDKQAKGAAP. At 1–2123 the chain is on the extracellular side; the sequence is MTMFWQQNVD…AEPFVSPEKR (2123 aa). A compositionally biased stretch (basic and acidic residues) spans 11 to 20; sequence HQSDEQDKQA. Asn30 carries N-linked (GlcNAc...) asparagine glycosylation. The segment covering 51–70 has biased composition (low complexity); that stretch reads NQQAPGTSSSSSNSQNASPS. The interval 51 to 75 is disordered; that stretch reads NQQAPGTSSSSSNSQNASPSKIVVR. An N-linked (GlcNAc...) asparagine glycan is attached at Asn129. The segment at 181–208 is disordered; it reads SRPQSTMAHHPDDRDRDRDPSEEQHGVD. Basic and acidic residues predominate over residues 189–208; the sequence is HHPDDRDRDRDPSEEQHGVD. The Fibronectin type-III 1 domain maps to 440–533; sequence APVIEHLMGL…GFVQTHSARN (94 aa). N-linked (GlcNAc...) asparagine glycosylation is found at Asn481, Asn505, Asn617, and Asn647. One can recognise a Fibronectin type-III 2 domain in the interval 824 to 924; that stretch reads AGGKPHSLKA…EPLAARTWPL (101 aa). An N-linked (GlcNAc...) asparagine glycan is attached at Asn966. One copy of the LDL-receptor class B repeat lies at 1010–1053; that stretch reads GRVYWTDLARNCVVRMDPWSGSRELLPVFEANFLALDPRQGHLY. Fibronectin type-III domains are found at residues 1202–1290 and 1294–1397; these read LPDS…TPPV and QPRR…VAPE. N-linked (GlcNAc...) asparagine glycans are attached at residues Asn1228, Asn1313, Asn1353, Asn1550, Asn1557, Asn1639, Asn1725, Asn1756, Asn1804, Asn1889, Asn1947, and Asn2073. Fibronectin type-III domains are found at residues 1801–1901, 1902–1988, and 1995–2117; these read PPRN…SFAE, LPEL…VYET, and QPGK…AEPF. Residues 2124–2147 traverse the membrane as a helical segment; that stretch reads GSLVLAIIAPAAIVSSCVLALVLV. The Cytoplasmic portion of the chain corresponds to 2148–2554; the sequence is RKVQKRRLRA…LYANEGVSRL (407 aa). One can recognise a Protein kinase domain in the interval 2209–2485; the sequence is LKLLRFLGSG…RCYNTLHAIS (277 aa). Residues 2215 to 2223 and Lys2242 each bind ATP; that span reads LGSGAFGEV. The Proton acceptor role is filled by Asp2343. Position 2380 is a phosphotyrosine; by autocatalysis (Tyr2380). Positions 2515–2527 are enriched in basic and acidic residues; that stretch reads GQPLEEHREHNER. The segment at 2515–2534 is disordered; sequence GQPLEEHREHNERPEDENLT.

The protein belongs to the protein kinase superfamily. Tyr protein kinase family. Insulin receptor subfamily. May form a complex with drk and Sos. Binds the phosphotyrosine interaction domain (PID) of Dab.

It is found in the cell membrane. The catalysed reaction is L-tyrosyl-[protein] + ATP = O-phospho-L-tyrosyl-[protein] + ADP + H(+). Functionally, receptor for an extracellular signal required to instruct a cell to differentiate into an R7 photoreceptor. The ligand for sev is the boss (bride of sevenless) protein on the surface of the neighboring R8 cell. The polypeptide is Protein sevenless (sev) (Drosophila melanogaster (Fruit fly)).